Reading from the N-terminus, the 430-residue chain is Bone morphogenetic protein 7 (430 aa).

The signal sequence occupies residues 1-29; sequence MHVRSLRAAAPHSFVALWAPLFLLRSALA. Positions 30–291 are excised as a propeptide; sequence DFSLDNEVHS…ATEVHLRSIR (262 aa). Asn186, Asn301, Asn320, and Asn371 each carry an N-linked (GlcNAc...) asparagine glycan. The segment at 290-310 is disordered; it reads IRSTGGKQRSQNRSKTPKNQE. Intrachain disulfides connect Cys329–Cys395, Cys358–Cys427, and Cys362–Cys429.

It belongs to the TGF-beta family. As to quaternary structure, homodimer; disulfide-linked. Interacts with SOSTDC1. Interacts with TWSG1. Interacts with FBN1 (via N-terminal domain) and FBN2. Interacts with type I receptor ACVR1. Interacts with type II receptor ACVR2A. Interacts with NOG; this interaction inhibits canonical BMP signaling. Interacts with SCUBE3. Interacts with ERFE; the interaction inhibits BMP-induced transcription of HAMP. Interacts with TGFBR3.

The protein localises to the secreted. Growth factor of the TGF-beta superfamily that plays important role in various biological processes, including embryogenesis, hematopoiesis, neurogenesis and skeletal morphogenesis. Initiates the canonical BMP signaling cascade by associating with type I receptor ACVR1 and type II receptor ACVR2A. Once all three components are bound together in a complex at the cell surface, ACVR2A phosphorylates and activates ACVR1. In turn, ACVR1 propagates signal by phosphorylating SMAD1/5/8 that travel to the nucleus and act as activators and repressors of transcription of target genes. For specific functions such as growth cone collapse in developing spinal neurons and chemotaxis of monocytes, also uses BMPR2 as type II receptor. Can also signal through non-canonical pathways such as P38 MAP kinase signaling cascade that promotes brown adipocyte differentiation through activation of target genes, including members of the SOX family of transcription factors. Promotes the expression of HAMP, this is repressed by its interaction with ERFE. In Mus musculus (Mouse), this protein is Bone morphogenetic protein 7 (Bmp7).